A 381-amino-acid chain; its full sequence is Opsin Rh2 (381 aa).

Topologically, residues 1-56 (MERSLLPEPPLAMALLGPRFEAQTGGNRSVLDNVLPDMAPLVNPYWSRFAPMDPTM) are extracellular. N-linked (GlcNAc...) asparagine glycosylation occurs at N27. A helical transmembrane segment spans residues 57-81 (SKILGLFTLVILIISCCGNGVVVYI). Over 82-93 (FGGTKSLRTPAN) the chain is Cytoplasmic. A helical membrane pass occupies residues 94-119 (LLVLNLAFSDFCMMASQSPVMIINFY). Residues 120 to 133 (YETWVLGPLWCDIY) are Extracellular-facing. An intrachain disulfide couples C130 to C207. A helical membrane pass occupies residues 134 to 153 (AACGSLFGCVSIWSMCMIAF). The Cytoplasmic segment spans residues 154–172 (DRYNVIVKGINGTPMTIKT). Residues 173–196 (SIMKIAFIWMMAVFWTIMPLIGWS) traverse the membrane as a helical segment. Topologically, residues 197–220 (SYVPEGNLTACSIDYMTRQWNPRS) are extracellular. Residues 221–248 (YLITYSLFVYYTPLFMICYSYWFIIATV) form a helical membrane-spanning segment. Residues 249–283 (AAHEKAMRDQAKKMNVKSLRSSEDCDKSAENKLAK) are Cytoplasmic-facing. Residues 284–307 (VALTTISLWFMAWTPYLIICYFGL) form a helical membrane-spanning segment. Over 308–314 (FKIDGLT) the chain is Extracellular. A helical transmembrane segment spans residues 315-339 (PLTTIWGATFAKTSAVYNPIVYGIS). N6-(retinylidene)lysine is present on K326. At 340 to 381 (HPKYRLVLKEKCPMCVCGSTDEPKPDAPPSDTETTSEAESKA) the chain is on the cytoplasmic side. Residues 358–381 (STDEPKPDAPPSDTETTSEAESKA) form a disordered region. Residues 370-381 (DTETTSEAESKA) show a composition bias toward polar residues.

It belongs to the G-protein coupled receptor 1 family. Opsin subfamily. In terms of processing, some or all of the Ser/Thr residues present in the C-terminal part may be phosphorylated.

The protein localises to the membrane. Its function is as follows. Visual pigments are the light-absorbing molecules that mediate vision. They consist of an apoprotein, opsin, covalently linked to cis-retinal. This is Opsin Rh2 (Rh2) from Drosophila pseudoobscura pseudoobscura (Fruit fly).